Consider the following 346-residue polypeptide: tRNA N6-adenosine threonylcarbamoyltransferase (346 aa).

Fe cation-binding residues include histidine 111 and histidine 115. Residues 134–138, aspartate 167, glycine 180, and asparagine 279 contribute to the substrate site; that span reads LVSGG. Residue aspartate 307 coordinates Fe cation.

The protein belongs to the KAE1 / TsaD family. Requires Fe(2+) as cofactor.

The protein localises to the cytoplasm. It catalyses the reaction L-threonylcarbamoyladenylate + adenosine(37) in tRNA = N(6)-L-threonylcarbamoyladenosine(37) in tRNA + AMP + H(+). Required for the formation of a threonylcarbamoyl group on adenosine at position 37 (t(6)A37) in tRNAs that read codons beginning with adenine. Is involved in the transfer of the threonylcarbamoyl moiety of threonylcarbamoyl-AMP (TC-AMP) to the N6 group of A37, together with TsaE and TsaB. TsaD likely plays a direct catalytic role in this reaction. The chain is tRNA N6-adenosine threonylcarbamoyltransferase from Burkholderia cenocepacia (strain ATCC BAA-245 / DSM 16553 / LMG 16656 / NCTC 13227 / J2315 / CF5610) (Burkholderia cepacia (strain J2315)).